We begin with the raw amino-acid sequence, 248 residues long: tRNA (guanine-N(1)-)-methyltransferase (248 aa).

S-adenosyl-L-methionine is bound by residues Gly113 and 133 to 138 (IGDYVL). The tract at residues 227 to 248 (RPAQTIRAKGESQKTPKNKTDG) is disordered. Positions 234–248 (AKGESQKTPKNKTDG) are enriched in basic and acidic residues.

Belongs to the RNA methyltransferase TrmD family. Homodimer.

Its subcellular location is the cytoplasm. It catalyses the reaction guanosine(37) in tRNA + S-adenosyl-L-methionine = N(1)-methylguanosine(37) in tRNA + S-adenosyl-L-homocysteine + H(+). Specifically methylates guanosine-37 in various tRNAs. This chain is tRNA (guanine-N(1)-)-methyltransferase, found in Rhodopseudomonas palustris (strain TIE-1).